The primary structure comprises 206 residues: Protein-methionine-sulfoxide reductase heme-binding subunit MsrQ (206 aa).

Transmembrane regions (helical) follow at residues 8–28 (IVWL…WLVW), 82–102 (LWCF…ELGI), 116–136 (PYLT…LTST), and 153–173 (FVYL…KILS).

It belongs to the MsrQ family. As to quaternary structure, heterodimer of a catalytic subunit (MsrP) and a heme-binding subunit (MsrQ). Requires FMN as cofactor. It depends on heme b as a cofactor.

It is found in the cell inner membrane. In terms of biological role, part of the MsrPQ system that repairs oxidized periplasmic proteins containing methionine sulfoxide residues (Met-O), using respiratory chain electrons. Thus protects these proteins from oxidative-stress damage caused by reactive species of oxygen and chlorine generated by the host defense mechanisms. MsrPQ is essential for the maintenance of envelope integrity under bleach stress, rescuing a wide series of structurally unrelated periplasmic proteins from methionine oxidation. MsrQ provides electrons for reduction to the reductase catalytic subunit MsrP, using the quinone pool of the respiratory chain. The sequence is that of Protein-methionine-sulfoxide reductase heme-binding subunit MsrQ from Citrobacter koseri (strain ATCC BAA-895 / CDC 4225-83 / SGSC4696).